The primary structure comprises 515 residues: MMTDSLILTPGTLSLADLRRLAFSAPSVTLAAGVRDTLAQAARSVDRIVADGRPVYGVNTGFGKLARTRIADANLRDLQRNLVLSHAAGIGAPMDDRTVRLILLLKANGLARGHSGVRPEIVDLLLEMGNRGVLPVIPQKGSVGASGDLAPLAHMTAVLIGAGQARVDGRVLPGDQALRAVGLAPVELGPKEGLALLNGTQASTALALVALFDAERVFQAALVTGALTLDAARGTDAPFDPRLHALRGQKGQIECAALYRALMADSAIRASHREDDERVQDPYCLRCQPQVMGACLDSLRHAASVLLIEANAVSDNPIHFAETDEMLSGGNFHAEPVAIAADLMAIAVSEVGAIAERRLALLVDAQMSGLPPFLVRDSGVNSGFMIAQVTAAALASENKTLAHPASIDSLPTSANQEDHVSMATFAARRVGDIVANVRDIVAIEYLAAVQGLDFLAPLQTSRPLAGAAAALRARVPFYDRDRIFTPDIEAARDLIADGVPTLLPGIADVLPRLEV.

Positions 145 to 147 (ASG) form a cross-link, 5-imidazolinone (Ala-Gly). 2,3-didehydroalanine (Ser) is present on Ser146.

It belongs to the PAL/histidase family. In terms of processing, contains an active site 4-methylidene-imidazol-5-one (MIO), which is formed autocatalytically by cyclization and dehydration of residues Ala-Ser-Gly.

The protein localises to the cytoplasm. The catalysed reaction is L-histidine = trans-urocanate + NH4(+). The protein operates within amino-acid degradation; L-histidine degradation into L-glutamate; N-formimidoyl-L-glutamate from L-histidine: step 1/3. This is Histidine ammonia-lyase from Gluconacetobacter diazotrophicus (strain ATCC 49037 / DSM 5601 / CCUG 37298 / CIP 103539 / LMG 7603 / PAl5).